Consider the following 212-residue polypeptide: A-kinase-interacting protein 1 (212 aa).

In terms of assembly, interacts with PRKACA and RELA.

Its subcellular location is the nucleus. In terms of biological role, enhances NF-kappa-B transcriptional activity by regulating the nuclear localization of the NF-kappa-B subunit RELA and promoting the phosphorylation of RELA by PRKACA. Regulates the effect of the cAMP-dependent protein kinase signaling pathway on the NF-kappa-B activation cascade. The sequence is that of A-kinase-interacting protein 1 (Akip1) from Mus musculus (Mouse).